We begin with the raw amino-acid sequence, 101 residues long: Iron-sulfur cluster assembly protein CyaY (101 aa).

It belongs to the frataxin family.

Involved in iron-sulfur (Fe-S) cluster assembly. May act as a regulator of Fe-S biogenesis. This Haemophilus influenzae (strain 86-028NP) protein is Iron-sulfur cluster assembly protein CyaY.